We begin with the raw amino-acid sequence, 175 residues long: Small ribosomal subunit protein uS5 (175 aa).

The region spanning 11–74 (LSEVLVDVNR…QAAKKRMMKV (64 aa)) is the S5 DRBM domain.

This sequence belongs to the universal ribosomal protein uS5 family. As to quaternary structure, part of the 30S ribosomal subunit. Contacts proteins S4 and S8.

In terms of biological role, with S4 and S12 plays an important role in translational accuracy. Located at the back of the 30S subunit body where it stabilizes the conformation of the head with respect to the body. The chain is Small ribosomal subunit protein uS5 from Rickettsia prowazekii (strain Madrid E).